Here is a 90-residue protein sequence, read N- to C-terminus: MELAVVSVLGADRVGIVAGISSVLAKHNVNIVDISQTVVQNIFSMVMIVDISKADVDISQLRRELEEEGKRLGVMVAVYHIDVFKYMQRI.

The 70-residue stretch at 5–74 (VVSVLGADRV…LEEEGKRLGV (70 aa)) folds into the ACT domain.

The protein belongs to the UPF0237 family.

The sequence is that of UPF0237 protein PAE3582 from Pyrobaculum aerophilum (strain ATCC 51768 / DSM 7523 / JCM 9630 / CIP 104966 / NBRC 100827 / IM2).